A 550-amino-acid chain; its full sequence is Formin-binding protein 1-like (550 aa).

Positions 1 to 263 (MSWGTELWDQ…AAKSVDERRD (263 aa)) constitute an F-BAR domain. Coiled coils occupy residues 66-258 (FTSC…AKSV) and 334-426 (LEDF…QRSE). The REM-1 domain occupies 339–416 (HLPPEQRRKR…IHKNEAWLSE (78 aa)). Positions 423–432 (QRSERRHSAE) are enriched in basic and acidic residues. Residues 423 to 467 (QRSERRHSAEANHLVAQGRESPEGSYTEDANQEGRVQPQPHAHPE) are disordered. Positions 479 to 540 (PAIGHCKSLY…PTSYIDITLE (62 aa)) constitute an SH3 domain.

This sequence belongs to the FNBP1 family. Homodimerizes, the dimers can polymerize end-to-end to form filamentous structures. Interacts with GTP-bound cdc42 and wasl/n-wasp.

It is found in the cytoplasm. Its subcellular location is the cytoskeleton. The protein localises to the cell cortex. It localises to the cytoplasmic vesicle. The protein resides in the cell membrane. Its function is as follows. Required to coordinate membrane tubulation with reorganization of the actin cytoskeleton during endocytosis. Promotes cdc42-induced actin polymerization by activating the wasl-waspip complex, the predominant form of wasl/n-wasp in cells. Essential for autophagy of intracellular bacterial pathogens. The protein is Formin-binding protein 1-like (fnbp1l) of Xenopus tropicalis (Western clawed frog).